A 201-amino-acid chain; its full sequence is Anthranilate synthase component 2 (201 aa).

The Glutamine amidotransferase type-1 domain maps to 3-196 (NILFIDNFDS…IDWALSSTPA (194 aa)). 57-59 (GPG) is an L-glutamine binding site. Cys84 (nucleophile; for GATase activity) is an active-site residue. L-glutamine-binding positions include Gln88 and 134–135 (SL). Catalysis depends on for GATase activity residues His170 and Glu172.

As to quaternary structure, heterotetramer consisting of two non-identical subunits: a beta subunit (TrpG) and a large alpha subunit (TrpE).

It catalyses the reaction chorismate + L-glutamine = anthranilate + pyruvate + L-glutamate + H(+). Its pathway is amino-acid biosynthesis; L-tryptophan biosynthesis; L-tryptophan from chorismate: step 1/5. Its function is as follows. Part of a heterotetrameric complex that catalyzes the two-step biosynthesis of anthranilate, an intermediate in the biosynthesis of L-tryptophan. In the first step, the glutamine-binding beta subunit (TrpG) of anthranilate synthase (AS) provides the glutamine amidotransferase activity which generates ammonia as a substrate that, along with chorismate, is used in the second step, catalyzed by the large alpha subunit of AS (TrpE) to produce anthranilate. In the absence of TrpG, TrpE can synthesize anthranilate directly from chorismate and high concentrations of ammonia. The chain is Anthranilate synthase component 2 (trpG) from Vibrio cholerae serotype O1 (strain ATCC 39315 / El Tor Inaba N16961).